We begin with the raw amino-acid sequence, 132 residues long: D-ribose pyranase (132 aa).

The Proton donor role is filled by His20. Residues Asp28, His99, and 121–123 (YAN) each bind substrate.

Belongs to the RbsD / FucU family. RbsD subfamily. As to quaternary structure, homodecamer.

It is found in the cytoplasm. The catalysed reaction is beta-D-ribopyranose = beta-D-ribofuranose. Its pathway is carbohydrate metabolism; D-ribose degradation; D-ribose 5-phosphate from beta-D-ribopyranose: step 1/2. Functionally, catalyzes the interconversion of beta-pyran and beta-furan forms of D-ribose. The protein is D-ribose pyranase of Variovorax paradoxus (strain S110).